The following is a 432-amino-acid chain: Enolase (432 aa).

Glutamine 167 is a binding site for (2R)-2-phosphoglycerate. Catalysis depends on glutamate 209, which acts as the Proton donor. Residues aspartate 246, glutamate 290, and aspartate 317 each coordinate Mg(2+). Residues lysine 342, arginine 371, serine 372, and lysine 393 each contribute to the (2R)-2-phosphoglycerate site. Lysine 342 functions as the Proton acceptor in the catalytic mechanism.

Belongs to the enolase family. In terms of assembly, component of the RNA degradosome, a multiprotein complex involved in RNA processing and mRNA degradation. Requires Mg(2+) as cofactor.

The protein localises to the cytoplasm. It is found in the secreted. It localises to the cell surface. The enzyme catalyses (2R)-2-phosphoglycerate = phosphoenolpyruvate + H2O. It participates in carbohydrate degradation; glycolysis; pyruvate from D-glyceraldehyde 3-phosphate: step 4/5. Catalyzes the reversible conversion of 2-phosphoglycerate (2-PG) into phosphoenolpyruvate (PEP). It is essential for the degradation of carbohydrates via glycolysis. This chain is Enolase, found in Shigella sonnei (strain Ss046).